Consider the following 286-residue polypeptide: Shikimate dehydrogenase (NADP(+)) (286 aa).

Shikimate is bound by residues serine 20–serine 22 and serine 67. Lysine 71 acts as the Proton acceptor in catalysis. 2 residues coordinate shikimate: asparagine 92 and aspartate 107. NADP(+)-binding positions include glycine 131–alanine 135 and alanine 230. Tyrosine 232 contributes to the shikimate binding site. Glycine 253 provides a ligand contact to NADP(+).

This sequence belongs to the shikimate dehydrogenase family. Homodimer.

The catalysed reaction is shikimate + NADP(+) = 3-dehydroshikimate + NADPH + H(+). It participates in metabolic intermediate biosynthesis; chorismate biosynthesis; chorismate from D-erythrose 4-phosphate and phosphoenolpyruvate: step 4/7. Its function is as follows. Involved in the biosynthesis of the chorismate, which leads to the biosynthesis of aromatic amino acids. Catalyzes the reversible NADPH linked reduction of 3-dehydroshikimate (DHSA) to yield shikimate (SA). The sequence is that of Shikimate dehydrogenase (NADP(+)) from Lactococcus lactis subsp. cremoris (strain SK11).